The following is a 249-amino-acid chain: Cytoplasmic envelopment protein 1 (249 aa).

This sequence belongs to the herpesviridae cytoplasmic envelopment protein 1 family.

The protein localises to the virion. It localises to the virion tegument. Its subcellular location is the host cytoplasm. It is found in the host Golgi apparatus. Its function is as follows. Plays a critical role in cytoplasmic virus egress. Participates in the final step of tegumentation and envelope acquisition within the host cytoplasm. In Homo sapiens (Human), this protein is Cytoplasmic envelopment protein 1 (U75).